The primary structure comprises 334 residues: Cytoplasmic envelopment protein 2 (334 aa).

It belongs to the herpesviridae cytoplasmic envelopment protein 2 family. Interacts with cytoplasmic envelopment protein 3 and with the capsid.

Its subcellular location is the virion tegument. The protein resides in the host cytoplasm. The protein localises to the host nucleus. In terms of biological role, plays a critical role in cytoplasmic virus egress. Participates in the final step of tegumentation and envelope acquisition within the host cytoplasm by directly interacting with the capsid. Upon virion binding to target cell, a signaling cascade is triggered to disrupt the interaction with the capsid, thereby preparing capsid uncoating. This Homo sapiens (Human) protein is Cytoplasmic envelopment protein 2 (ORF33).